A 97-amino-acid polypeptide reads, in one-letter code: U-reduvitoxin-Pr10a (97 aa).

Residues 1–18 (MKTALFLVFALAFIAVEG) form the signal peptide. 2 consecutive Pacifastin domains span residues 22–59 (KACSKPGQTVLAPDGCNHCRCSKNGIIMGCTKKMCPPR) and 62–97 (KQSCKPGATFKHKDGCNTCKCSDDGKSARCTARLCW). 3 disulfide bridges follow: C24-C42, C37-C56, and C40-C51. The segment at 57 to 59 (PPR) is pro-Pro-Arg motif necessary for proteolytic processing. 3 cysteine pairs are disulfide-bonded: C65-C82, C77-C96, and C80-C91.

Belongs to the protease inhibitor I19 family. As to expression, expressed by the venom gland.

The protein resides in the secreted. In terms of biological role, inhibits trypsin activity and prophenoloxidase (PPO) activation, an enzyme essential for both clotting and insect innate immune responses. It does not inhibit activity of chymotrypsin and protease K, and has no effect on phenoloxidase (PO) activity. This Platymeris rhadamanthus (Red spot assassin bug) protein is U-reduvitoxin-Pr10a.